Reading from the N-terminus, the 848-residue chain is Translation initiation factor IF-2 (848 aa).

The segment covering 1 to 10 has biased composition (basic and acidic residues); sequence MSENNNDKIT. Disordered regions lie at residues 1–79 and 121–163; these read MSEN…EKPV and AERQ…LFSS. The span at 17–33 shows a compositional bias: polar residues; sequence LKRSGSETNTVKQNFNH. Basic and acidic residues predominate over residues 121–138; the sequence is AERQAAEKQAKESEEGLH. Residues 149–163 are compositionally biased toward polar residues; sequence KSSSNTTKPTPLFSS. Positions 346–513 constitute a tr-type G domain; that stretch reads TRPPIVTIMG…AILLQAEILD (168 aa). Positions 355 to 362 are G1; it reads GHVDHGKT. 355–362 serves as a coordination point for GTP; sequence GHVDHGKT. The segment at 380–384 is G2; sequence GITQH. Positions 401-404 are G3; sequence DTPG. GTP is bound by residues 401-405 and 455-458; these read DTPGH and NKID. Residues 455 to 458 are G4; that stretch reads NKID. Positions 491–493 are G5; the sequence is SAK.

This sequence belongs to the TRAFAC class translation factor GTPase superfamily. Classic translation factor GTPase family. IF-2 subfamily.

It is found in the cytoplasm. Its function is as follows. One of the essential components for the initiation of protein synthesis. Protects formylmethionyl-tRNA from spontaneous hydrolysis and promotes its binding to the 30S ribosomal subunits. Also involved in the hydrolysis of GTP during the formation of the 70S ribosomal complex. This is Translation initiation factor IF-2 from Bartonella bacilliformis (strain ATCC 35685 / KC583 / Herrer 020/F12,63).